The sequence spans 565 residues: Proline--tRNA ligase (565 aa).

It belongs to the class-II aminoacyl-tRNA synthetase family. ProS type 1 subfamily. Homodimer.

Its subcellular location is the cytoplasm. It carries out the reaction tRNA(Pro) + L-proline + ATP = L-prolyl-tRNA(Pro) + AMP + diphosphate. Its function is as follows. Catalyzes the attachment of proline to tRNA(Pro) in a two-step reaction: proline is first activated by ATP to form Pro-AMP and then transferred to the acceptor end of tRNA(Pro). As ProRS can inadvertently accommodate and process non-cognate amino acids such as alanine and cysteine, to avoid such errors it has two additional distinct editing activities against alanine. One activity is designated as 'pretransfer' editing and involves the tRNA(Pro)-independent hydrolysis of activated Ala-AMP. The other activity is designated 'posttransfer' editing and involves deacylation of mischarged Ala-tRNA(Pro). The misacylated Cys-tRNA(Pro) is not edited by ProRS. The protein is Proline--tRNA ligase of Francisella tularensis subsp. tularensis (strain WY96-3418).